A 1390-amino-acid polypeptide reads, in one-letter code: DNA-directed RNA polymerase III subunit RPC1 (1390 aa).

Positions 69, 72, 79, 82, 109, and 112 each coordinate Zn(2+). Position 144 (lysine 144) interacts with DNA. Positions 156 and 159 each coordinate Zn(2+). DNA contacts are provided by lysine 167, serine 326, lysine 348, arginine 353, arginine 360, and arginine 366. At lysine 445 the chain carries N6-acetyllysine. Residue arginine 464 coordinates RNA. 3 residues coordinate Mg(2+): aspartate 499, aspartate 501, and aspartate 503. Aspartate 503 lines the RNA pocket. The interval 844 to 856 (PTEFFFHTMAGRE) is bridging helix. DNA-binding residues include arginine 1159, arginine 1305, and lysine 1323.

This sequence belongs to the RNA polymerase beta' chain family. Component of the RNA polymerase III (Pol III) complex consisting of 17 subunits: a ten-subunit catalytic core composed of POLR3A/RPC1, POLR3B/RPC2, POLR1C/RPAC1, POLR1D/RPAC2, POLR3K/RPC10, POLR2E/RPABC1, POLR2F/RPABC2, POLR2H/RPABC3, POLR2K/RPABC4 and POLR2L/RPABC5; a mobile stalk composed of two subunits POLR3H/RPC8 and CRCP/RPC9, protruding from the core and functioning primarily in transcription initiation; and additional subunits homologous to general transcription factors of the RNA polymerase II machinery, POLR3C/RPC3-POLR3F/RPC6-POLR3G/RPC7 heterotrimer required for transcription initiation and POLR3D/RPC4-POLR3E/RPC5 heterodimer involved in both transcription initiation and termination. As part of the RNA polymerase III complex, interacts with PKP2. Mg(2+) serves as cofactor.

It is found in the nucleus. The protein localises to the cytoplasm. The protein resides in the cytosol. The catalysed reaction is RNA(n) + a ribonucleoside 5'-triphosphate = RNA(n+1) + diphosphate. Functionally, catalytic core component of RNA polymerase III (Pol III), a DNA-dependent RNA polymerase which synthesizes small non-coding RNAs using the four ribonucleoside triphosphates as substrates. Synthesizes 5S rRNA, snRNAs, tRNAs and miRNAs from at least 500 distinct genomic loci. Pol III-mediated transcription cycle proceeds through transcription initiation, transcription elongation and transcription termination stages. During transcription initiation, Pol III is recruited to DNA promoters type I, II or III with the help of general transcription factors and other specific initiation factors. Once the polymerase has escaped from the promoter it enters the elongation phase during which RNA is actively polymerized, based on complementarity with the template DNA strand. Transcription termination involves the release of the RNA transcript and polymerase from the DNA. Forms Pol III active center together with the second largest subunit POLR3B/RPC2. Appends one nucleotide at a time to the 3' end of the nascent RNA, with POLR3A/RPC1 contributing a Mg(2+)-coordinating DxDGD motif, and POLR3B/RPC2 participating in the coordination of a second Mg(2+) ion and providing lysine residues believed to facilitate Watson-Crick base pairing between the incoming nucleotide and template base. Typically, Mg(2+) ions direct a 5' nucleoside triphosphate to form a phosphodiester bond with the 3' hydroxyl of the preceding nucleotide of the nascent RNA, with the elimination of pyrophosphate. Pol III plays a key role in sensing and limiting infection by intracellular bacteria and DNA viruses. Acts as a nuclear and cytosolic DNA sensor involved in innate immune response. Can sense non-self dsDNA that serves as template for transcription into dsRNA. The non-self RNA polymerase III transcripts, such as Epstein-Barr virus-encoded RNAs (EBERs) induce type I interferon and NF-kappa-B through the RIG-I pathway. The sequence is that of DNA-directed RNA polymerase III subunit RPC1 from Bos taurus (Bovine).